The following is a 96-amino-acid chain: Putative regulatory protein Teth514_1762 (96 aa).

It belongs to the RemA family.

The polypeptide is Putative regulatory protein Teth514_1762 (Thermoanaerobacter sp. (strain X514)).